The sequence spans 55 residues: Conotoxin Cal6.40 (55 aa).

The first 21 residues, 1 to 21 (MSGSGVLLLTLLLLVPLSALA), serve as a signal peptide directing secretion. 3 disulfide bridges follow: cysteine 24–cysteine 36, cysteine 29–cysteine 41, and cysteine 35–cysteine 50.

As to expression, expressed by the venom duct.

It localises to the secreted. Functionally, probable neurotoxin. The sequence is that of Conotoxin Cal6.40 from Californiconus californicus (California cone).